A 148-amino-acid chain; its full sequence is MQLILLEKVANLGNLGDKVNVKAGYGRNYLLPYGKATAATAANVAAFEERRAELEKLAADKKASAETRAAQLAELEVTITATAGDEGKLFGSIGTHDIADALTASGVEVAKSEVRLPNGTIRNVGEFDVAVHLHSDVEATVRVVVVAA.

Belongs to the bacterial ribosomal protein bL9 family.

In terms of biological role, binds to the 23S rRNA. In Pseudomonas syringae pv. tomato (strain ATCC BAA-871 / DC3000), this protein is Large ribosomal subunit protein bL9.